A 131-amino-acid chain; its full sequence is Interleukin-13 (131 aa).

The signal sequence occupies residues 1–18 (MALWLTVVIALTCLGGLA). Residues Asn-38, Asn-48, Asn-56, and Asn-71 are each glycosylated (N-linked (GlcNAc...) asparagine). Cystine bridges form between Cys-47/Cys-75 and Cys-63/Cys-89.

Belongs to the IL-4/IL-13 family. Interacts with IL13RA2.

The protein resides in the secreted. In terms of biological role, cytokine that plays important roles in allergic inflammation and immune response to parasite infection. Synergizes with IL2 in regulating interferon-gamma synthesis. Stimulates B-cell proliferation, and activation of eosinophils, basophils, and mast cells. Plays an important role in controlling IL33 activity by modulating the production of transmembrane and soluble forms of interleukin-1 receptor-like 1/IL1RL1. Displays the capacity to antagonize Th1-driven proinflammatory immune response and downregulates synthesis of many proinflammatory cytokines including IL1, IL6, IL10, IL12 and TNF-alpha through a mechanism that partially involves suppression of NF-kappa-B. Also functions on nonhematopoietic cells, including endothelial cells where it induces vascular cell adhesion protein 1/VCAM1, which is important in the recruitment of eosinophils. Exerts its biological effects through its receptors which comprises the IL4R chain and the IL13RA1 chain, to activate JAK1 and TYK2, leading to the activation of STAT6. Aside from IL13RA1, another receptor IL13RA2 acts as a high affinity decoy for IL13 and mediates internalization and depletion of extracellular IL13. This Canis lupus familiaris (Dog) protein is Interleukin-13 (IL13).